Consider the following 244-residue polypeptide: 1-(5-phosphoribosyl)-5-[(5-phosphoribosylamino)methylideneamino] imidazole-4-carboxamide isomerase (244 aa).

The active-site Proton acceptor is Asp-8. Asp-130 acts as the Proton donor in catalysis.

It belongs to the HisA/HisF family.

It is found in the cytoplasm. It catalyses the reaction 1-(5-phospho-beta-D-ribosyl)-5-[(5-phospho-beta-D-ribosylamino)methylideneamino]imidazole-4-carboxamide = 5-[(5-phospho-1-deoxy-D-ribulos-1-ylimino)methylamino]-1-(5-phospho-beta-D-ribosyl)imidazole-4-carboxamide. It participates in amino-acid biosynthesis; L-histidine biosynthesis; L-histidine from 5-phospho-alpha-D-ribose 1-diphosphate: step 4/9. In Syntrophomonas wolfei subsp. wolfei (strain DSM 2245B / Goettingen), this protein is 1-(5-phosphoribosyl)-5-[(5-phosphoribosylamino)methylideneamino] imidazole-4-carboxamide isomerase.